Reading from the N-terminus, the 356-residue chain is S-adenosylmethionine:tRNA ribosyltransferase-isomerase (356 aa).

This sequence belongs to the QueA family. As to quaternary structure, monomer.

Its subcellular location is the cytoplasm. The catalysed reaction is 7-aminomethyl-7-carbaguanosine(34) in tRNA + S-adenosyl-L-methionine = epoxyqueuosine(34) in tRNA + adenine + L-methionine + 2 H(+). Its pathway is tRNA modification; tRNA-queuosine biosynthesis. Functionally, transfers and isomerizes the ribose moiety from AdoMet to the 7-aminomethyl group of 7-deazaguanine (preQ1-tRNA) to give epoxyqueuosine (oQ-tRNA). The chain is S-adenosylmethionine:tRNA ribosyltransferase-isomerase from Citrobacter koseri (strain ATCC BAA-895 / CDC 4225-83 / SGSC4696).